The primary structure comprises 512 residues: 2-isopropylmalate synthase (512 aa).

In terms of domain architecture, Pyruvate carboxyltransferase spans 4–266 (IQFFDTTLRD…ETNIVLNQFK (263 aa)). The Mn(2+) site is built by Asp13, His201, His203, and Asn237. A regulatory domain region spans residues 390–512 (ELKHLQVQYV…SKQADFEEVK (123 aa)).

The protein belongs to the alpha-IPM synthase/homocitrate synthase family. LeuA type 1 subfamily. As to quaternary structure, homodimer. Mn(2+) is required as a cofactor.

It localises to the cytoplasm. The enzyme catalyses 3-methyl-2-oxobutanoate + acetyl-CoA + H2O = (2S)-2-isopropylmalate + CoA + H(+). Its pathway is amino-acid biosynthesis; L-leucine biosynthesis; L-leucine from 3-methyl-2-oxobutanoate: step 1/4. Functionally, catalyzes the condensation of the acetyl group of acetyl-CoA with 3-methyl-2-oxobutanoate (2-ketoisovalerate) to form 3-carboxy-3-hydroxy-4-methylpentanoate (2-isopropylmalate). In Listeria monocytogenes serotype 4b (strain CLIP80459), this protein is 2-isopropylmalate synthase.